Here is a 348-residue protein sequence, read N- to C-terminus: Putative methylthioribose-1-phosphate isomerase (348 aa).

Residues 55-57 (RGA), R98, and Q203 contribute to the substrate site. D244 functions as the Proton donor in the catalytic mechanism. Position 253 to 254 (253 to 254 (NK)) interacts with substrate.

Belongs to the eIF-2B alpha/beta/delta subunits family. MtnA subfamily.

The enzyme catalyses 5-(methylsulfanyl)-alpha-D-ribose 1-phosphate = 5-(methylsulfanyl)-D-ribulose 1-phosphate. Its function is as follows. Catalyzes the interconversion of methylthioribose-1-phosphate (MTR-1-P) into methylthioribulose-1-phosphate (MTRu-1-P). The protein is Putative methylthioribose-1-phosphate isomerase of Methanosarcina acetivorans (strain ATCC 35395 / DSM 2834 / JCM 12185 / C2A).